The chain runs to 266 residues: Undecaprenyl-diphosphatase (266 aa).

The next 7 helical transmembrane spans lie at 41 to 61 (NLAF…VILW), 82 to 102 (YVIN…FFKD), 106 to 126 (AIFG…AALL), 140 to 160 (ISMK…LPGL), 180 to 200 (LAQF…LLDG), 213 to 233 (IPTL…CLAC), and 245 to 265 (LIYF…VSQL).

The protein belongs to the UppP family.

It is found in the cell inner membrane. The catalysed reaction is di-trans,octa-cis-undecaprenyl diphosphate + H2O = di-trans,octa-cis-undecaprenyl phosphate + phosphate + H(+). Catalyzes the dephosphorylation of undecaprenyl diphosphate (UPP). Confers resistance to bacitracin. The chain is Undecaprenyl-diphosphatase from Bacteroides fragilis (strain ATCC 25285 / DSM 2151 / CCUG 4856 / JCM 11019 / LMG 10263 / NCTC 9343 / Onslow / VPI 2553 / EN-2).